The following is a 46-amino-acid chain: Protein PsbN (46 aa).

The chain crosses the membrane as a helical span at residues 10 to 30; sequence LAIIVLVVLLGLTGLGVYMAF.

This sequence belongs to the PsbN family.

Its subcellular location is the cellular thylakoid membrane. Functionally, may play a role in photosystem I and II biogenesis. This is Protein PsbN from Prochlorococcus marinus (strain MIT 9211).